We begin with the raw amino-acid sequence, 150 residues long: Macrodomain Ter protein (150 aa).

The protein belongs to the MatP family. As to quaternary structure, homodimer.

It localises to the cytoplasm. Functionally, required for spatial organization of the terminus region of the chromosome (Ter macrodomain) during the cell cycle. Prevents early segregation of duplicated Ter macrodomains during cell division. Binds specifically to matS, which is a 13 bp signature motif repeated within the Ter macrodomain. The chain is Macrodomain Ter protein from Shigella dysenteriae serotype 1 (strain Sd197).